The following is an 875-amino-acid chain: Phosphoenolpyruvate carboxylase (875 aa).

Catalysis depends on residues histidine 137 and lysine 542.

The protein belongs to the PEPCase type 1 family. Mg(2+) serves as cofactor.

It catalyses the reaction oxaloacetate + phosphate = phosphoenolpyruvate + hydrogencarbonate. Forms oxaloacetate, a four-carbon dicarboxylic acid source for the tricarboxylic acid cycle. The sequence is that of Phosphoenolpyruvate carboxylase from Pseudomonas putida (strain GB-1).